Consider the following 427-residue polypeptide: 3-isopropylmalate dehydratase large subunit (427 aa).

Residues Cys-308, Cys-368, and Cys-371 each contribute to the [4Fe-4S] cluster site.

The protein belongs to the aconitase/IPM isomerase family. LeuC type 2 subfamily. As to quaternary structure, heterodimer of LeuC and LeuD. It depends on [4Fe-4S] cluster as a cofactor.

The catalysed reaction is (2R,3S)-3-isopropylmalate = (2S)-2-isopropylmalate. It participates in amino-acid biosynthesis; L-leucine biosynthesis; L-leucine from 3-methyl-2-oxobutanoate: step 2/4. In terms of biological role, catalyzes the isomerization between 2-isopropylmalate and 3-isopropylmalate, via the formation of 2-isopropylmaleate. The polypeptide is 3-isopropylmalate dehydratase large subunit (Geobacter metallireducens (strain ATCC 53774 / DSM 7210 / GS-15)).